Reading from the N-terminus, the 572-residue chain is 2-succinyl-5-enolpyruvyl-6-hydroxy-3-cyclohexene-1-carboxylate synthase (572 aa).

Belongs to the TPP enzyme family. MenD subfamily. As to quaternary structure, homodimer. It depends on Mg(2+) as a cofactor. The cofactor is Mn(2+). Requires thiamine diphosphate as cofactor.

It carries out the reaction isochorismate + 2-oxoglutarate + H(+) = 5-enolpyruvoyl-6-hydroxy-2-succinyl-cyclohex-3-ene-1-carboxylate + CO2. It participates in quinol/quinone metabolism; 1,4-dihydroxy-2-naphthoate biosynthesis; 1,4-dihydroxy-2-naphthoate from chorismate: step 2/7. Its pathway is quinol/quinone metabolism; menaquinone biosynthesis. In terms of biological role, catalyzes the thiamine diphosphate-dependent decarboxylation of 2-oxoglutarate and the subsequent addition of the resulting succinic semialdehyde-thiamine pyrophosphate anion to isochorismate to yield 2-succinyl-5-enolpyruvyl-6-hydroxy-3-cyclohexene-1-carboxylate (SEPHCHC). The sequence is that of 2-succinyl-5-enolpyruvyl-6-hydroxy-3-cyclohexene-1-carboxylate synthase from Aeromonas salmonicida (strain A449).